The sequence spans 466 residues: Transcription factor SOX-10 (466 aa).

Residues 1 to 67 (MAEEQDLSEV…QQDGEADDDK (67 aa)) form a disordered region. The span at 23-32 (LSPGSAPSLG) shows a compositional bias: low complexity. S24 is subject to Phosphoserine. The dimerization (DIM) stretch occupies residues 62–102 (EADDDKFPVCIREAVSQVLSGYDWTLVPMPVRVNGASKSKP). Positions 104-172 (VKRPMNAFMV…QHKKDHPDYK (69 aa)) form a DNA-binding region, HMG box. The short motif at 134 to 145 (LSKTLGKLWRLL) is the Nuclear export signal element. Composition is skewed to basic and acidic residues over residues 160–173 (LRMQ…DYKY) and 254–271 (ADPK…KPHI). Disordered regions lie at residues 160-199 (LRMQ…EQGG), 212-274 (LDHR…IDFG), 354-375 (AQVK…QPST), and 433-466 (RPLY…LSRP). Residues 228-310 (PEHPSGQSHG…LPPNGHPGHV (83 aa)) form a transactivation domain (TAM) region. A transactivation domain (TAC) region spans residues 353–466 (KAQVKTETAG…QPVYTTLSRP (114 aa)). A compositionally biased stretch (polar residues) spans 440–466 (SDPSPSGPQSHSPTHWEQPVYTTLSRP).

In terms of assembly, monomer. Interacts with ARMCX3 at the mitochondrial outer membrane surface. Interacts with PAX3. Expressed in fetal brain and in adult brain, heart, small intestine and colon.

It is found in the cytoplasm. It localises to the nucleus. The protein resides in the mitochondrion outer membrane. Functionally, transcription factor that plays a central role in developing and mature glia. Specifically activates expression of myelin genes, during oligodendrocyte (OL) maturation, such as DUSP15 and MYRF, thereby playing a central role in oligodendrocyte maturation and CNS myelination. Once induced, MYRF cooperates with SOX10 to implement the myelination program. Transcriptional activator of MITF, acting synergistically with PAX3. Transcriptional activator of MBP, via binding to the gene promoter. In Homo sapiens (Human), this protein is Transcription factor SOX-10 (SOX10).